Here is a 63-residue protein sequence, read N- to C-terminus: Conotoxin Tx-D0111 (63 aa).

A signal peptide spans 1-19 (MRCLPVFVILLLLIASTPS). Residues 20-47 (DTVPLKTKDDMPQASFHGNARRTLQMLS) constitute a propeptide that is removed on maturation.

It belongs to the conotoxin T superfamily. In terms of processing, contains 2 disulfide bonds that can be either 'C1-C3, C2-C4' or 'C1-C4, C2-C3', since these disulfide connectivities have been observed for conotoxins with cysteine framework V (for examples, see AC P0DQQ7 and AC P81755). Expressed by the venom duct.

The protein resides in the secreted. The sequence is that of Conotoxin Tx-D0111 from Conus textile (Cloth-of-gold cone).